Reading from the N-terminus, the 1717-residue chain is PH domain leucine-rich repeat-containing protein phosphatase 1 (1717 aa).

Met-1 bears the N-acetylmethionine mark. Disordered stretches follow at residues 1–25 (MEPA…SAPA), 41–118 (LAAA…GANS), 136–156 (AASS…GAAG), and 252–470 (PGAA…PPPT). Low complexity predominate over residues 98–110 (APQPIAGGAAPVP). Over residues 262 to 274 (EPPPEAGPRLAPP) the composition is skewed to pro residues. Low complexity-rich tracts occupy residues 313–325 (SRRA…DSSP) and 333–345 (PVSS…PVVS). Phosphoserine is present on Ser-317. Composition is skewed to polar residues over residues 346 to 358 (DTES…SAES) and 408 to 417 (QTASSPQPQQ). A Phosphoserine modification is found at Ser-412. The PH domain occupies 536-636 (RIQLSGMYNV…WLRQVSKVAS (101 aa)). LRR repeat units lie at residues 638–659 (RISS…LFYS), 661–682 (DLTH…PAAR), 692–712 (KLKS…AVCS), 715–736 (TLAE…VGVM), 738–760 (NLQT…ENMK), 761–783 (QLSY…EKLT), 784–804 (AVDK…QALR), 808–831 (HIKH…DFLQ), 832–853 (HVTQ…IFNN), 873–894 (FLKA…PVPN), 895–916 (YLSY…VCES), 918–939 (KLEV…LFCN), 941–962 (SLRK…LERT), 963–984 (SVEV…LLMK), 987–1008 (SLRF…TLSE), 1013–1033 (ILQE…PLLT), 1037–1058 (HLKI…KMAK), 1061–1082 (ELEE…IMNC), 1084–1105 (RMHT…MQLP), 1106–1127 (EIKC…ENLP), and 1129–1150 (KLQE…TLEL). The tract at residues 1076–1205 (PTTIMNCRRM…NNFCDNREAL (130 aa)) is interaction with NHERF1. The PPM-type phosphatase domain occupies 1175 to 1422 (SHGYTEASGV…DSISAVVVQL (248 aa)). Residues Asp-1210, Gly-1211, Lys-1374, and Asp-1413 each contribute to the Mn(2+) site. Disordered regions lie at residues 1458–1510 (DRPS…SPAY) and 1673–1717 (EVKE…DTPL). The segment covering 1468–1489 (SSSSGMASEISSELSTSEMSSE) has biased composition (low complexity). Positions 1715 to 1717 (TPL) match the PDZ-binding; required for interaction with NHERF1 motif.

In terms of assembly, interacts with the nucleotide free form of K-Ras (KRAS) via its LRR repeats. Interacts with AKT2, AKT3, PRKCB isoform beta-II, STK4, RPS6KB1, RAF1. Isoform 1 (predominantly) and isoform 2 interact with BRAP. Interacts with FKBP5; FKBP5 acts as a scaffold for PHLPP1 and Akt. Interacts with SCRIB; SCRIB acts as a scaffold for PHLPP1 and Akt. Interacts with NHERF1; NHERF1 scaffolds a heterotrimeric complex with PTEN at the plasma membrane. Interacts with WDR48 and USP12. Mn(2+) serves as cofactor. As to expression, in colorectal cancer tissue, expression is highest in the surface epithelium of normal colonic mucosa adjacent to the cancer tissue but is largely excluded from the crypt bases. Expression is lost or significantly decreased in 78% of tested tumors (at protein level). Ubiquitously expressed in non-cancerous tissues.

It is found in the cytoplasm. It localises to the membrane. The protein localises to the nucleus. Its subcellular location is the cell membrane. It carries out the reaction O-phospho-L-seryl-[protein] + H2O = L-seryl-[protein] + phosphate. The enzyme catalyses O-phospho-L-threonyl-[protein] + H2O = L-threonyl-[protein] + phosphate. Its activity is regulated as follows. Insensitive to okadaic acid. Deubiquitination by WDR48-USP12 complex positively regulates PHLPP1 stability. Functionally, protein phosphatase involved in regulation of Akt and PKC signaling. Mediates dephosphorylation in the C-terminal domain hydrophobic motif of members of the AGC Ser/Thr protein kinase family; specifically acts on 'Ser-473' of AKT2 and AKT3, 'Ser-660' of PRKCB and 'Ser-657' of PRKCA. Isoform 2 seems to have a major role in regulating Akt signaling in hippocampal neurons. Akt regulates the balance between cell survival and apoptosis through a cascade that primarily alters the function of transcription factors that regulate pro- and antiapoptotic genes. Dephosphorylation of 'Ser-473' of Akt triggers apoptosis and suppression of tumor growth. Dephosphorylation of PRKCA and PRKCB leads to their destabilization and degradation. Dephosphorylates STK4 on 'Thr-387' leading to STK4 activation and apoptosis. Dephosphorylates RPS6KB1 and is involved in regulation of cap-dependent translation. Inhibits cancer cell proliferation and may act as a tumor suppressor. Dephosphorylates RAF1 inhibiting its kinase activity. May act as a negative regulator of K-Ras signaling in membrane rafts. Involved in the hippocampus-dependent long-term memory formation. Involved in circadian control by regulating the consolidation of circadian periodicity after resetting. Involved in development and function of regulatory T-cells. The sequence is that of PH domain leucine-rich repeat-containing protein phosphatase 1 (PHLPP1) from Homo sapiens (Human).